We begin with the raw amino-acid sequence, 524 residues long: Protopine 6-monooxygenase (524 aa).

The next 3 membrane-spanning stretches (helical) occupy residues 4–24 (LMLA…VFLY), 232–252 (LASL…DIFQ), and 319–339 (MIMG…SLLM). Heme is bound at residue cysteine 462.

This sequence belongs to the cytochrome P450 family. Heme is required as a cofactor.

The protein localises to the endoplasmic reticulum membrane. It catalyses the reaction protopine + reduced [NADPH--hemoprotein reductase] + O2 = 6-hydroxyprotopine + oxidized [NADPH--hemoprotein reductase] + H2O + H(+). It participates in alkaloid biosynthesis. Functionally, catalyzes the conversion of protopine and allocryptopine to dihydrosanguinarine and dihydrochelerythrine, respectively, in the biosynthesis of isoquinoline alkaloid sanguinarine. In Eschscholzia californica (California poppy), this protein is Protopine 6-monooxygenase (CYP82N2v2).